The sequence spans 168 residues: Iron-sulfur cluster assembly enzyme ISCU (168 aa).

The transit peptide at 1-35 directs the protein to the mitochondrion; that stretch reads MAAATGAGRLRRAASALLLRSPRLPARELSAPARL. Ser-15 carries the phosphoserine modification. Cys-70 serves as the catalytic Cysteine persulfide intermediate. Cys-70 is modified (cysteine persulfide). Residues Asp-72, Cys-96, and Cys-139 each contribute to the Zn(2+) site. Cys-139 functions as the Cysteine persulfide intermediate in the catalytic mechanism. Cys-139 is modified (cysteine persulfide).

It belongs to the NifU family. In terms of assembly, homodimer; Tyr-36-mediated dimerization of two iron- and sulfide-containing ISCU subunit bind to the cysteine desulfurase complex. Component of the mitochondrial core iron-sulfur cluster (ISC) complex composed of NFS1, LYRM4, NDUFAB1, ISCU, FXN, and FDX2; this complex is a heterohexamer containing two copies of each monomer. Interacts (D-state) with NFS1 (homodimer form); each monomer interacts with the C-terminal regions of each NFS1 monomer. Interacts (monomer form) with FXN (via ferrous form); the interaction is possible when both are bound to the dimeric form of the cysteine desulfurase complex (NFS1:LYRM4) and enhances FXN interaction to the dimeric form of the cysteine desulfurase complex (NFS1:LYRM4). Interacts with GLRX5. Interacts (D-state) with HSPA9. Interacts (S-state) with HSCB; this interaction stimulates the ATPase activity of HSPA9. Component of a complex composed of FXN, NFS1, LYRM4 and ISCU. Post-translationally, cysteine persulfide is reduced by thiol-containing molecules such as glutathione and L-cysteine. In terms of processing, phosphorylation at Ser-15 is required for ISCU protein stabilization in the cytosol, whereas dephosphorylation of Ser-15, due to the inhibition of mTORC1 (mammalian target of rapamycin complex 1) complex, leads to degradation of the precursor form and ultimately to a decrease in the mitochondrial mature form.

The protein localises to the mitochondrion. Its function is as follows. Mitochondrial scaffold protein, of the core iron-sulfur cluster (ISC) assembly complex, that provides the structural architecture on which the [2Fe-2S] clusters are assembled. The core iron-sulfur cluster (ISC) assembly complex is involved in the de novo synthesis of a [2Fe-2S] cluster, the first step of the mitochondrial iron-sulfur protein biogenesis. This process is initiated by the cysteine desulfurase complex (NFS1:LYRM4:NDUFAB1) that produces persulfide which is delivered on the scaffold protein ISCU in a FXN-dependent manner. Then this complex is stabilized by FDX2 which provides reducing equivalents to accomplish the [2Fe-2S] cluster assembly. Finally, the [2Fe-2S] cluster is transferred from ISCU to chaperone proteins, including HSCB, HSPA9 and GLRX5. Exists as two slow interchanging conformational states, a structured (S) and disordered (D) form. May modulate NFS1 desulfurase activity in a zinc-dependent manner. Modulates the interaction between FXN and the cysteine desulfurase complex. The chain is Iron-sulfur cluster assembly enzyme ISCU from Mus musculus (Mouse).